The primary structure comprises 539 residues: Phosphoenolpyruvate carboxykinase (ATP) (539 aa).

R64, Y206, and K212 together coordinate substrate. ATP is bound by residues K212, H231, and 247 to 255; that span reads GLSGTGKTT. Positions 212 and 231 each coordinate Mn(2+). Mn(2+) is bound at residue D268. Residues E296, R332, 448 to 449, and T454 each bind ATP; that span reads RI. R332 contacts substrate.

Belongs to the phosphoenolpyruvate carboxykinase (ATP) family. As to quaternary structure, monomer. Mn(2+) is required as a cofactor.

It is found in the cytoplasm. It catalyses the reaction oxaloacetate + ATP = phosphoenolpyruvate + ADP + CO2. It participates in carbohydrate biosynthesis; gluconeogenesis. Involved in the gluconeogenesis. Catalyzes the conversion of oxaloacetate (OAA) to phosphoenolpyruvate (PEP) through direct phosphoryl transfer between the nucleoside triphosphate and OAA. This is Phosphoenolpyruvate carboxykinase (ATP) from Cronobacter sakazakii (strain ATCC BAA-894) (Enterobacter sakazakii).